The chain runs to 351 residues: Purine permease 3 (351 aa).

Transmembrane regions (helical) follow at residues 4–24 (ALVI…PLIM), 35–55 (IWFS…PLLF), 72–92 (FFLI…LSGF), 108–128 (TAAL…FFMV), 132–152 (FTPF…VLGM), 168–188 (ITGF…LPLV), 207–227 (FQLI…FIAG), 249–269 (VAVF…GLIF), 274–294 (LVSG…AVIF), and 304–324 (GLSL…EIKS). The region spanning 45 to 152 (GFPVIFIPLL…LTVGAAVLGM (108 aa)) is the EamA domain. The segment at 329–351 (RRIQQEESQETEQSSLSRPISEC) is disordered.

The protein belongs to the purine permeases (TC 2.A.7.14) family. In terms of tissue distribution, restricted to pollen.

Its subcellular location is the membrane. In terms of biological role, may be involved in transport of purine derivatives during pollen germination and tube elongation. This is Purine permease 3 (PUP3) from Arabidopsis thaliana (Mouse-ear cress).